Consider the following 870-residue polypeptide: MKTNKKDEETGGNVYAHLDKTSVLQEARAFNETPINARKCCFILSKLIYIIQQGESIGRTEATEAFFGVTKLWQSKDVSLRRMVYLAVKELAEVSDDVIIVTSSLTKDMTGREDLYRAAAIRALCKITDTGMLQTIERYMKQAIVDRNSAISSSAIVSSIHLMRKSSEVVRRWANEVQEAVSSDNHMVQYHALALLYQIRANDRLAVNKLVQKFSKNALRSPYAVCYLIRIATRCLVDDDQPDSSVFTFIESCLRHKSEMVVYEAARAIVSLPQTTPSEIQPAITALQMCCTSPKAAVRFAAVRTLNKVAMAHPNAVMSCNVDLEKFITDPNRSIATLAITTLLKTGAESSVERLMQQIAGFVNEISDEFKIVVVDAIRSLCSRYPRKHTVMMPFLAKMLRSDGSYDYKKAIVETIIAIIEENPDAKVAGLAHLCEFIEDCEHDNLSTRVLHLLGREAPKTPNPSSYIRFIYNRVILESTKVRAAAVTALAKFGAQCVDLRPSIQVLLKRCLLDSDDEVRDRATFYLKMLTEAAEGLIHNFILDGLQVSPSGLERSILDYLRSGSYSSPFDLRVVPVTQQALSQPEKRVPQLVEEEEKPKAPKVEPYAAQLAAIPQFAALGPVFKSSTRIALTESIAEYTVHMIKHTFANAMVLQFECKNTMNDQLLLDVSVELEDPDGEWETGNTVQIDKLPYGEVHSAFSLLEFPDSGAISGSLGAILKFKVMDVDPTSGEPDSDDTYEQTYVLEEVDVNVSDSVQGVAKSSFGSAWEALGDDATREETFQLSTVENIPDAVKKISEILGLVPCERSDRVPEGKTQHTVFLSGVFRGGYDVLSKATVAVDPNDNSIAMNIIIKSNEPLVADLVISAVV.

6 HEAT repeats span residues Thr-60–Asp-97, Ile-99–Leu-133, Glu-168–Leu-205, Ser-278–Asn-315, Ala-316–Ser-350, and His-389–Asp-425.

The protein belongs to the COPG family. As to quaternary structure, oligomeric complex that consists of at least the alpha, beta, beta', gamma, delta, epsilon and zeta subunits.

It is found in the cytoplasm. It localises to the golgi apparatus membrane. The protein resides in the cytoplasmic vesicle. Its subcellular location is the COPI-coated vesicle membrane. Functionally, the coatomer is a cytosolic protein complex that binds to dilysine motifs and reversibly associates with Golgi non-clathrin-coated vesicles, which further mediate biosynthetic protein transport from the ER, via the Golgi up to the trans Golgi network. Coatomer complex is required for budding from Golgi membranes, and is essential for the retrograde Golgi-to-ER transport of dilysine-tagged proteins. This is Probable coatomer subunit gamma from Caenorhabditis elegans.